We begin with the raw amino-acid sequence, 111 residues long: WAP four-disulfide core domain protein 12 (111 aa).

A signal peptide spans 1–23 (MRSSRFLVLMVSLALVTLVASEG). The region spanning 27–74 (NTEKPGVCPADNVRCIKSDPPQCHTDQDCQGIRKCCYLHCGFKCVIPV) is the WAP domain. 4 disulfide bridges follow: Cys-34–Cys-62, Cys-41–Cys-66, Cys-49–Cys-61, and Cys-55–Cys-70.

The protein resides in the secreted. Functionally, antibacterial protein. Putative acid-stable proteinase inhibitor. This is WAP four-disulfide core domain protein 12 (WFDC12) from Saimiri boliviensis boliviensis (Bolivian squirrel monkey).